The primary structure comprises 470 residues: 3-isopropylmalate dehydratase large subunit (470 aa).

[4Fe-4S] cluster-binding residues include Cys-349, Cys-409, and Cys-412.

This sequence belongs to the aconitase/IPM isomerase family. LeuC type 1 subfamily. As to quaternary structure, heterodimer of LeuC and LeuD. It depends on [4Fe-4S] cluster as a cofactor.

It catalyses the reaction (2R,3S)-3-isopropylmalate = (2S)-2-isopropylmalate. It participates in amino-acid biosynthesis; L-leucine biosynthesis; L-leucine from 3-methyl-2-oxobutanoate: step 2/4. In terms of biological role, catalyzes the isomerization between 2-isopropylmalate and 3-isopropylmalate, via the formation of 2-isopropylmaleate. In Koribacter versatilis (strain Ellin345), this protein is 3-isopropylmalate dehydratase large subunit.